Here is a 460-residue protein sequence, read N- to C-terminus: Ammonium transporter 1 member 3 (460 aa).

The next 10 membrane-spanning stretches (helical) occupy residues 15–37, 50–72, 98–117, 124–146, 166–188, 209–227, 255–277, 305–327, 337–356, and 377–399; these read AIYL…MLCA, LTNV…AFAF, FFLY…SGSI, TAYL…HWLW, IDFA…GSIV, NATL…WFGF, AVTT…RLLV, PWAA…ILAL, AAQL…GLFA, and GLIL…SIVV.

This sequence belongs to the ammonia transporter channel (TC 1.A.11.2) family. Leaves.

The protein localises to the membrane. Functionally, ammonium transporter that may be involved in ammonium transport throughout the plant. The sequence is that of Ammonium transporter 1 member 3 (AMT1-3) from Solanum lycopersicum (Tomato).